Consider the following 364-residue polypeptide: 3-isopropylmalate dehydrogenase (364 aa).

78–89 is a binding site for NAD(+); it reads GPKWGTGAVRPE. Residues Arg-96, Arg-106, Arg-135, and Asp-224 each coordinate substrate. 3 residues coordinate Mg(2+): Asp-224, Asp-249, and Asp-253. 288–299 lines the NAD(+) pocket; that stretch reads GSAPDLPANKVN.

The protein belongs to the isocitrate and isopropylmalate dehydrogenases family. Homodimer. Mg(2+) is required as a cofactor. The cofactor is Mn(2+).

The protein resides in the cytoplasm. It carries out the reaction (2R,3S)-3-isopropylmalate + NAD(+) = 4-methyl-2-oxopentanoate + CO2 + NADH. The protein operates within amino-acid biosynthesis; L-leucine biosynthesis; L-leucine from 3-methyl-2-oxobutanoate: step 3/4. In terms of biological role, catalyzes the oxidation of 3-carboxy-2-hydroxy-4-methylpentanoate (3-isopropylmalate) to 3-carboxy-4-methyl-2-oxopentanoate. The product decarboxylates to 4-methyl-2 oxopentanoate. This chain is 3-isopropylmalate dehydrogenase (LEU2), found in Wickerhamomyces anomalus (strain ATCC 8168 / CBS 5759 / DSM 6766 / JCM 3585 / IAM 12210 / NCYC 432 / NBRC 10213 / NRRL Y-366 / AJ 5027) (Yeast).